A 356-amino-acid polypeptide reads, in one-letter code: Altered inheritance of mitochondria protein 23, mitochondrial (356 aa).

The N-terminal 32 residues, 1 to 32, are a transit peptide targeting the mitochondrion; the sequence is MLKVPLSDVLSQKMLFLKSFRYFHCTKYFSRD.

It belongs to the AIM23 family.

Its subcellular location is the mitochondrion. The sequence is that of Altered inheritance of mitochondria protein 23, mitochondrial (AIM23) from Saccharomyces cerevisiae (strain ATCC 204508 / S288c) (Baker's yeast).